Consider the following 235-residue polypeptide: Small heat shock protein, chloroplastic (235 aa).

Disordered regions lie at residues 1-23 (MAYT…TSKI) and 51-80 (TGDN…ERRP). Over residues 52 to 63 (GDNKDTSVDVHH) the composition is skewed to basic and acidic residues. Positions 64–74 (SSAQGGNNQGT) are enriched in polar residues. The sHSP domain occupies 126-235 (SGTGEIRTPW…EKKVIDVQIN (110 aa)).

It belongs to the small heat shock protein (HSP20) family. In fruits, flowers, leaves, and stems.

It is found in the plastid. The protein localises to the chloroplast. This chain is Small heat shock protein, chloroplastic (HSP21), found in Solanum lycopersicum (Tomato).